We begin with the raw amino-acid sequence, 1086 residues long: Formin-like protein 2 (1086 aa).

The N-myristoyl glycine moiety is linked to residue Gly2. The region spanning 23 to 469 (LPMPEPGELE…EAIQRQSTLE (447 aa)) is the GBD/FH3 domain. Residue Ser188 is modified to Phosphoserine. The tract at residues 513–597 (SVGPTMGAAS…APPLPSAPPL (85 aa)) is disordered. A compositionally biased stretch (pro residues) spans 525–537 (PLPPPPPPLPPSS). Residues 538–547 (DTPETVQNGP) are compositionally biased toward polar residues. Pro residues-rich tracts occupy residues 548–576 (VTPP…PLPG) and 583–597 (PAPP…APPL). The region spanning 616–1007 (IKKPIKTKFR…LMEKLLEQEA (392 aa)) is the FH2 domain. Residues 1040–1079 (NRHVYEGKDGAIEDIITVLKTVPFTARTAKRGSRFFCEPV) enclose the DAD domain.

This sequence belongs to the formin homology family.

The protein localises to the cytoplasm. Functionally, plays a role in the regulation of cell morphology and cytoskeletal organization. Required in the cortical actin filament dynamics. The polypeptide is Formin-like protein 2 (Homo sapiens (Human)).